Consider the following 62-residue polypeptide: Neurotoxin 3 (62 aa).

Over residues 1 to 16 (LECHDQQSSQTPTTTG) the composition is skewed to polar residues. Residues 1–22 (LECHDQQSSQTPTTTGCSGGET) are disordered. Disulfide bonds link Cys3/Cys24, Cys17/Cys41, Cys43/Cys54, and Cys55/Cys60.

Belongs to the three-finger toxin family. Short-chain subfamily. Type I alpha-neurotoxin sub-subfamily. As to expression, expressed by the venom gland.

It is found in the secreted. Functionally, binds to muscle nicotinic acetylcholine receptor (nAChR) and inhibit acetylcholine from binding to the receptor, thereby impairing neuromuscular transmission. The polypeptide is Neurotoxin 3 (Naja sputatrix (Malayan spitting cobra)).